A 281-amino-acid chain; its full sequence is 2-dehydro-3-deoxyphosphooctonate aldolase (281 aa).

The protein belongs to the KdsA family.

The protein localises to the cytoplasm. The catalysed reaction is D-arabinose 5-phosphate + phosphoenolpyruvate + H2O = 3-deoxy-alpha-D-manno-2-octulosonate-8-phosphate + phosphate. It functions in the pathway carbohydrate biosynthesis; 3-deoxy-D-manno-octulosonate biosynthesis; 3-deoxy-D-manno-octulosonate from D-ribulose 5-phosphate: step 2/3. The protein operates within bacterial outer membrane biogenesis; lipopolysaccharide biosynthesis. The polypeptide is 2-dehydro-3-deoxyphosphooctonate aldolase (Janthinobacterium sp. (strain Marseille) (Minibacterium massiliensis)).